We begin with the raw amino-acid sequence, 321 residues long: Phosphate acyltransferase (321 aa).

The protein belongs to the PlsX family. As to quaternary structure, homodimer. Probably interacts with PlsY.

Its subcellular location is the cytoplasm. It carries out the reaction a fatty acyl-[ACP] + phosphate = an acyl phosphate + holo-[ACP]. It participates in lipid metabolism; phospholipid metabolism. Catalyzes the reversible formation of acyl-phosphate (acyl-PO(4)) from acyl-[acyl-carrier-protein] (acyl-ACP). This enzyme utilizes acyl-ACP as fatty acyl donor, but not acyl-CoA. The chain is Phosphate acyltransferase from Chlamydia trachomatis serovar A (strain ATCC VR-571B / DSM 19440 / HAR-13).